A 284-amino-acid chain; its full sequence is 2-dehydro-3-deoxyphosphooctonate aldolase (284 aa).

This sequence belongs to the KdsA family.

It localises to the cytoplasm. The catalysed reaction is D-arabinose 5-phosphate + phosphoenolpyruvate + H2O = 3-deoxy-alpha-D-manno-2-octulosonate-8-phosphate + phosphate. It functions in the pathway carbohydrate biosynthesis; 3-deoxy-D-manno-octulosonate biosynthesis; 3-deoxy-D-manno-octulosonate from D-ribulose 5-phosphate: step 2/3. The protein operates within bacterial outer membrane biogenesis; lipopolysaccharide biosynthesis. This Photorhabdus laumondii subsp. laumondii (strain DSM 15139 / CIP 105565 / TT01) (Photorhabdus luminescens subsp. laumondii) protein is 2-dehydro-3-deoxyphosphooctonate aldolase.